We begin with the raw amino-acid sequence, 435 residues long: 5-hydroxybenzimidazole synthase (435 aa).

Residues Met-95, Tyr-124, His-163, 186–188, 227–230, and Glu-266 contribute to the substrate site; these read SKG and NGLR. His-270 is a binding site for Zn(2+). Tyr-293 is a substrate binding site. His-334 contributes to the Zn(2+) binding site. Residues Cys-410, Cys-413, and Cys-417 each coordinate [4Fe-4S] cluster.

It belongs to the ThiC family. 5-hydroxybenzimidazole synthase subfamily. As to quaternary structure, homodimer. The cofactor is [4Fe-4S] cluster.

It catalyses the reaction 5-amino-1-(5-phospho-beta-D-ribosyl)imidazole + AH2 + S-adenosyl-L-methionine = 5-hydroxybenzimidazole + 5'-deoxyadenosine + formate + L-methionine + A + NH4(+) + phosphate + 2 H(+). In terms of biological role, catalyzes the conversion of aminoimidazole ribotide (AIR) to 5-hydroxybenzimidazole (5-HBI) in a radical S-adenosyl-L-methionine (SAM)-dependent reaction. Is thus involved in the anaerobic biosynthesis of the benzimidazole lower axial ligand of the cobamide produced by G.metallireducens. The protein is 5-hydroxybenzimidazole synthase of Geobacter metallireducens (strain ATCC 53774 / DSM 7210 / GS-15).